Reading from the N-terminus, the 724-residue chain is Catalase-peroxidase (724 aa).

Residues 98-226 (WHSAGTYRIA…LAAVMMGLIY (129 aa)) constitute a cross-link (tryptophyl-tyrosyl-methioninium (Trp-Tyr) (with M-252)). The active-site Proton acceptor is the H99. The segment at residues 226-252 (YVNPEGVDGNPDPLKTAQDMRVTFARM) is a cross-link (tryptophyl-tyrosyl-methioninium (Tyr-Met) (with W-98)). H267 is a heme b binding site.

The protein belongs to the peroxidase family. Peroxidase/catalase subfamily. Homodimer or homotetramer. The cofactor is heme b. Post-translationally, formation of the three residue Trp-Tyr-Met cross-link is important for the catalase, but not the peroxidase activity of the enzyme.

The enzyme catalyses H2O2 + AH2 = A + 2 H2O. The catalysed reaction is 2 H2O2 = O2 + 2 H2O. Functionally, bifunctional enzyme with both catalase and broad-spectrum peroxidase activity. The polypeptide is Catalase-peroxidase (Vibrio cholerae serotype O1 (strain ATCC 39315 / El Tor Inaba N16961)).